The primary structure comprises 741 residues: Subtilisin-like protease SBT4.4 (741 aa).

Positions 1–24 (MAKGTTFIFLFSSLLVLSLSSVSA) are cleaved as a signal peptide. The propeptide at 25-112 (DKDDHGDQQV…VFPSRKLKLQ (88 aa)) is activation peptide. Residues 34–111 (VYIVYLGSLP…SVFPSRKLKL (78 aa)) enclose the Inhibitor I9 domain. The Peptidase S8 domain maps to 116–589 (SWNFMGLKEG…SGHVDPIDAI (474 aa)). Asp144 (charge relay system) is an active-site residue. Residues Asn175 and Asn195 are each glycosylated (N-linked (GlcNAc...) asparagine). The active-site Charge relay system is the His204. N-linked (GlcNAc...) asparagine glycans are attached at residues Asn227 and Asn357. The PA domain occupies 359–445 (TNYPLVYGKS…LSNDDYKSLV (87 aa)). N-linked (GlcNAc...) asparagine glycosylation occurs at Asn449. The active-site Charge relay system is Ser528. Residues Asn565, Asn610, Asn623, and Asn654 are each glycosylated (N-linked (GlcNAc...) asparagine).

This sequence belongs to the peptidase S8 family. Post-translationally, the C-terminal propeptide is autocleaved.

Its subcellular location is the secreted. The sequence is that of Subtilisin-like protease SBT4.4 from Arabidopsis thaliana (Mouse-ear cress).